A 1036-amino-acid chain; its full sequence is uncharacterized protein (1036 aa).

The first 24 residues, 1-24, serve as a signal peptide directing secretion; sequence MKRVGLIGVIMAALLVISATPVMA. The chain crosses the membrane as a helical span at residues 1011-1033; it reads GGGVPGFEAVFAIAGLLAVAYLL.

The protein localises to the membrane. This is an uncharacterized protein from Archaeoglobus fulgidus (strain ATCC 49558 / DSM 4304 / JCM 9628 / NBRC 100126 / VC-16).